Here is a 425-residue protein sequence, read N- to C-terminus: UPF0229 protein ETA_15540 (425 aa).

The disordered stretch occupies residues 60-111 (NEPSFHQGRGGERYRVHPGNDHFVQNDRVDRPQGGGAGGSGQGNAGKDGEGQ). Residues 68–90 (RGGERYRVHPGNDHFVQNDRVDR) show a composition bias toward basic and acidic residues. Gly residues predominate over residues 92–105 (QGGGAGGSGQGNAG).

This sequence belongs to the UPF0229 family.

In Erwinia tasmaniensis (strain DSM 17950 / CFBP 7177 / CIP 109463 / NCPPB 4357 / Et1/99), this protein is UPF0229 protein ETA_15540.